A 190-amino-acid polypeptide reads, in one-letter code: MNNNLPSEAVAHAVAVLKNEHVIAYPTEAVFGVGCDPDSETAVMRLLELKQRPVEKGLILIAASFEQLKPYIDDSRLSDSQREAIFSCWPGPVTFVFPARPETPRWLTGRFDSLAVRVTNHPLVIELCEAYGKPLVSTSANLTGQPPCRTTAEVHAQFGDSFPVVDGATGGRQNPSEIRDALTGELFRQG.

Residues 7 to 190 (SEAVAHAVAV…ALTGELFRQG (184 aa)) enclose the YrdC-like domain.

Belongs to the SUA5 family. TsaC subfamily.

Its subcellular location is the cytoplasm. It catalyses the reaction L-threonine + hydrogencarbonate + ATP = L-threonylcarbamoyladenylate + diphosphate + H2O. In terms of biological role, required for the formation of a threonylcarbamoyl group on adenosine at position 37 (t(6)A37) in tRNAs that read codons beginning with adenine. Catalyzes the conversion of L-threonine, HCO(3)(-)/CO(2) and ATP to give threonylcarbamoyl-AMP (TC-AMP) as the acyladenylate intermediate, with the release of diphosphate. The chain is Threonylcarbamoyl-AMP synthase from Klebsiella pneumoniae subsp. pneumoniae (strain ATCC 700721 / MGH 78578).